A 265-amino-acid chain; its full sequence is tRNA pseudouridine synthase A (265 aa).

D52 acts as the Nucleophile in catalysis. Y112 contacts substrate.

It belongs to the tRNA pseudouridine synthase TruA family. As to quaternary structure, homodimer.

The enzyme catalyses uridine(38/39/40) in tRNA = pseudouridine(38/39/40) in tRNA. Functionally, formation of pseudouridine at positions 38, 39 and 40 in the anticodon stem and loop of transfer RNAs. The chain is tRNA pseudouridine synthase A from Akkermansia muciniphila (strain ATCC BAA-835 / DSM 22959 / JCM 33894 / BCRC 81048 / CCUG 64013 / CIP 107961 / Muc).